The following is a 520-amino-acid chain: GMP synthase [glutamine-hydrolyzing] (520 aa).

One can recognise a Glutamine amidotransferase type-1 domain in the interval lysine 12 to aspartate 205. The active-site Nucleophile is cysteine 89. Catalysis depends on residues histidine 179 and glutamate 181. The 190-residue stretch at tryptophan 206 to arginine 395 folds into the GMPS ATP-PPase domain. Serine 233–serine 239 is a binding site for ATP.

Homodimer.

It catalyses the reaction XMP + L-glutamine + ATP + H2O = GMP + L-glutamate + AMP + diphosphate + 2 H(+). It participates in purine metabolism; GMP biosynthesis; GMP from XMP (L-Gln route): step 1/1. Functionally, catalyzes the synthesis of GMP from XMP. The protein is GMP synthase [glutamine-hydrolyzing] of Streptococcus equi subsp. equi (strain 4047).